The sequence spans 254 residues: D-aminoacyl-tRNA deacylase (254 aa).

A disordered region spans residues 61–85; it reads KPTLTVHTPGNLTEDNSRGGNSEEI. Residues 65 to 84 are compositionally biased toward polar residues; sequence TVHTPGNLTEDNSRGGNSEE.

The protein belongs to the DtdA deacylase family. Monomer. Zn(2+) serves as cofactor.

The catalysed reaction is a D-aminoacyl-tRNA + H2O = a tRNA + a D-alpha-amino acid + H(+). The enzyme catalyses glycyl-tRNA(Ala) + H2O = tRNA(Ala) + glycine + H(+). Its function is as follows. D-aminoacyl-tRNA deacylase with broad substrate specificity. By recycling D-aminoacyl-tRNA to D-amino acids and free tRNA molecules, this enzyme counteracts the toxicity associated with the formation of D-aminoacyl-tRNA entities in vivo. The polypeptide is D-aminoacyl-tRNA deacylase (Methanococcus maripaludis (strain C5 / ATCC BAA-1333)).